Reading from the N-terminus, the 207-residue chain is Nuclear transcription factor Y subunit beta (207 aa).

The a domain stretch occupies residues 1–52; sequence MTMDGDSSTTDASQLGISADYIGGSHYVIQPHDDTEDSMNDHEDTNGSKESF. A disordered region spans residues 27–52; sequence YVIQPHDDTEDSMNDHEDTNGSKESF. The span at 39-52 shows a compositional bias: basic and acidic residues; sequence MNDHEDTNGSKESF. The b domain stretch occupies residues 53-142; sequence REQDIYLPIA…PLKLYLQKFR (90 aa). A DNA-binding region spans residues 59–65; sequence LPIANVA. Residues 86–97 are subunit association domain (SAD); sequence VQECVSEFISFI. Residue Lys140 forms a Glycyl lysine isopeptide (Lys-Gly) (interchain with G-Cter in ubiquitin) linkage. The tract at residues 143–207 is c domain; the sequence is EAMKGEKGIG…ISGVQQIQFS (65 aa).

It belongs to the NFYB/HAP3 subunit family. As to quaternary structure, heterotrimeric transcription factor composed of three components, NF-YA, NF-YB and NF-YC. NF-YB and NF-YC must interact and dimerize for NF-YA association and DNA binding. Interacts with C1QBP. In terms of processing, monoubiquitination at Lys-140 plays an important role in transcriptional activation by allowing the deposition of histone H3 methylations as well as histone H2B monoubiquitination at 'Lys-121'.

It localises to the nucleus. Component of the sequence-specific heterotrimeric transcription factor (NF-Y) which specifically recognizes a 5'-CCAAT-3' box motif found in the promoters of its target genes. NF-Y can function as both an activator and a repressor, depending on its interacting cofactors. The sequence is that of Nuclear transcription factor Y subunit beta (NFYB) from Bos taurus (Bovine).